The primary structure comprises 256 residues: Thiazole synthase (256 aa).

The active-site Schiff-base intermediate with DXP is the Lys95. Residues Gly156, 182-183 (AG), and 204-205 (NT) each bind 1-deoxy-D-xylulose 5-phosphate.

The protein belongs to the ThiG family. Homotetramer. Forms heterodimers with either ThiH or ThiS.

Its subcellular location is the cytoplasm. The catalysed reaction is [ThiS sulfur-carrier protein]-C-terminal-Gly-aminoethanethioate + 2-iminoacetate + 1-deoxy-D-xylulose 5-phosphate = [ThiS sulfur-carrier protein]-C-terminal Gly-Gly + 2-[(2R,5Z)-2-carboxy-4-methylthiazol-5(2H)-ylidene]ethyl phosphate + 2 H2O + H(+). Its pathway is cofactor biosynthesis; thiamine diphosphate biosynthesis. Catalyzes the rearrangement of 1-deoxy-D-xylulose 5-phosphate (DXP) to produce the thiazole phosphate moiety of thiamine. Sulfur is provided by the thiocarboxylate moiety of the carrier protein ThiS. In vitro, sulfur can be provided by H(2)S. The protein is Thiazole synthase of Escherichia coli O17:K52:H18 (strain UMN026 / ExPEC).